Here is a 57-residue protein sequence, read N- to C-terminus: uncharacterized protein (57 aa).

It localises to the plastid. This is an uncharacterized protein from Euglena longa (Euglenophycean alga).